The primary structure comprises 690 residues: Eukaryotic translation initiation factor 3 subunit B (690 aa).

The segment covering 1-11 (MAKKKSEDHSG) has biased composition (basic and acidic residues). The interval 1–33 (MAKKKSEDHSGADANDSDYNEEPNFDDPPNFVD) is disordered. Residues 15-25 (NDSDYNEEPNF) are compositionally biased toward acidic residues. Positions 57–141 (SVVVVDNMPK…YTFAVNLFTD (85 aa)) constitute an RRM domain. 5 WD repeats span residues 207-246 (TRERFTDTFVKWSPLGTYVVTFHKPGVAIWGGSSFQKIQK), 292-331 (GDGMSVLSMFRWSHDDKYVARMGESSIHIYETPSFYLLDL), 334-369 (IKIPGIRGFSWSPTDNVIAYWVEEQNQIPARVTLMK), 442-484 (EIRE…KPSL), and 530-575 (PDHF…IKRT). The stretch at 613–646 (EQKDRLRLTRASKELLEKRAQLRETFMEYRNKRI) forms a coiled coil.

This sequence belongs to the eIF-3 subunit B family. As to quaternary structure, component of the eukaryotic translation initiation factor 3 (eIF-3) complex. The eIF-3 complex interacts with pix. Interacts with mxt.

The protein localises to the cytoplasm. Its function is as follows. RNA-binding component of the eukaryotic translation initiation factor 3 (eIF-3) complex, which is involved in protein synthesis of a specialized repertoire of mRNAs and, together with other initiation factors, stimulates binding of mRNA and methionyl-tRNAi to the 40S ribosome. The eIF-3 complex specifically targets and initiates translation of a subset of mRNAs involved in cell proliferation. In Drosophila grimshawi (Hawaiian fruit fly), this protein is Eukaryotic translation initiation factor 3 subunit B.